Here is a 391-residue protein sequence, read N- to C-terminus: Terminal nucleotidyltransferase 5C (391 aa).

Belongs to the TENT family. In terms of assembly, interacts with BCCIP and PABPC1; the interaction has no effect on TENT5C poly(A) polymerase function. Interacts with PLK4; this interaction leads to the TENT5C recruitment into the centrosome. In terms of tissue distribution, expressed by splenocytes, expression is increased in activated splenocytes.

It localises to the nucleus. It is found in the cytoplasm. The protein localises to the cytoskeleton. Its subcellular location is the microtubule organizing center. The protein resides in the centrosome. The enzyme catalyses RNA(n) + ATP = RNA(n)-3'-adenine ribonucleotide + diphosphate. Its function is as follows. Catalyzes the transfer of one adenosine molecule from an ATP to an mRNA poly(A) tail bearing a 3'-OH terminal group and enhances mRNA stability and gene expression. Can also elongate RNA oligos ending with uridine molecule, provided that the sequence is adenosine-rich. Mainly targets mRNAs encoding endoplasmic reticulum-targeted protein. This chain is Terminal nucleotidyltransferase 5C, found in Mus musculus (Mouse).